We begin with the raw amino-acid sequence, 347 residues long: S-adenosylmethionine:tRNA ribosyltransferase-isomerase (347 aa).

This sequence belongs to the QueA family. In terms of assembly, monomer.

The protein localises to the cytoplasm. It carries out the reaction 7-aminomethyl-7-carbaguanosine(34) in tRNA + S-adenosyl-L-methionine = epoxyqueuosine(34) in tRNA + adenine + L-methionine + 2 H(+). It functions in the pathway tRNA modification; tRNA-queuosine biosynthesis. Its function is as follows. Transfers and isomerizes the ribose moiety from AdoMet to the 7-aminomethyl group of 7-deazaguanine (preQ1-tRNA) to give epoxyqueuosine (oQ-tRNA). The chain is S-adenosylmethionine:tRNA ribosyltransferase-isomerase from Exiguobacterium sibiricum (strain DSM 17290 / CCUG 55495 / CIP 109462 / JCM 13490 / 255-15).